We begin with the raw amino-acid sequence, 363 residues long: Eukaryotic translation initiation factor 3 subunit H (363 aa).

The MPN domain occupies 13–163 (VQVEALVVMK…LRAFRLSTAF (151 aa)).

The protein belongs to the eIF-3 subunit H family. As to quaternary structure, component of the eukaryotic translation initiation factor 3 (eIF-3) complex.

It is found in the cytoplasm. Functionally, component of the eukaryotic translation initiation factor 3 (eIF-3) complex, which is involved in protein synthesis of a specialized repertoire of mRNAs and, together with other initiation factors, stimulates binding of mRNA and methionyl-tRNAi to the 40S ribosome. The eIF-3 complex specifically targets and initiates translation of a subset of mRNAs involved in cell proliferation. In Pyricularia oryzae (strain 70-15 / ATCC MYA-4617 / FGSC 8958) (Rice blast fungus), this protein is Eukaryotic translation initiation factor 3 subunit H.